The primary structure comprises 347 residues: Olfactory receptor 1L6 (347 aa).

The Extracellular portion of the chain corresponds to 1–62 (MSYFYRLKLM…GLSSNPQLQK (62 aa)). N-linked (GlcNAc...) asparagine glycosylation is present at asparagine 41. The chain crosses the membrane as a helical span at residues 63-86 (PLFAIFLIMYLLAAVGNVLIIPAI). Topologically, residues 87 to 94 (YSDPRLHT) are cytoplasmic. The chain crosses the membrane as a helical span at residues 95-116 (PMYFFLSNLSFMDICFTTVIVP). Topologically, residues 117-137 (KMLVNFLSETKVISYVGCLAQ) are extracellular. Cysteine 134 and cysteine 226 form a disulfide bridge. A helical membrane pass occupies residues 138-157 (MYFFMAFGNTDSYLLASMAI). Over 158-176 (DRLVAICNPLHYDVVMKPR) the chain is Cytoplasmic. A helical transmembrane segment spans residues 177–195 (HCLLMLLGSCSISHLHSLF). Topologically, residues 196–233 (RVLLMSRLSFCASHIIKHFFCDTQPVLKLSCSDTSSSQ) are extracellular. A helical membrane pass occupies residues 234–256 (MVVMTETLAVIVTPFLCIIFSYL). At 257-273 (RIMVTVLRIPSAAGKWK) the chain is on the cytoplasmic side. A helical transmembrane segment spans residues 274-296 (AFSTCGSHLTAVALFYGSIIYVY). The Extracellular segment spans residues 297-309 (FRPLSMYSVVRDR). A helical membrane pass occupies residues 310–329 (VATVMYTVVTPMLNPFIYSL). At 330–347 (RNKDMKRGLKKLQDRIYR) the chain is on the cytoplasmic side.

This sequence belongs to the G-protein coupled receptor 1 family.

It localises to the cell membrane. Odorant receptor. The chain is Olfactory receptor 1L6 (OR1L6) from Homo sapiens (Human).